The primary structure comprises 295 residues: ATP synthase gamma chain (295 aa).

The protein belongs to the ATPase gamma chain family. F-type ATPases have 2 components, CF(1) - the catalytic core - and CF(0) - the membrane proton channel. CF(1) has five subunits: alpha(3), beta(3), gamma(1), delta(1), epsilon(1). CF(0) has three main subunits: a, b and c.

It is found in the cell membrane. Produces ATP from ADP in the presence of a proton gradient across the membrane. The gamma chain is believed to be important in regulating ATPase activity and the flow of protons through the CF(0) complex. The chain is ATP synthase gamma chain from Caldanaerobacter subterraneus subsp. tengcongensis (strain DSM 15242 / JCM 11007 / NBRC 100824 / MB4) (Thermoanaerobacter tengcongensis).